The sequence spans 130 residues: Small ribosomal subunit protein uS8 (130 aa).

The protein belongs to the universal ribosomal protein uS8 family. In terms of assembly, part of the 30S ribosomal subunit.

In terms of biological role, one of the primary rRNA binding proteins, it binds directly to 16S rRNA central domain where it helps coordinate assembly of the platform of the 30S subunit. This chain is Small ribosomal subunit protein uS8, found in Natronomonas pharaonis (strain ATCC 35678 / DSM 2160 / CIP 103997 / JCM 8858 / NBRC 14720 / NCIMB 2260 / Gabara) (Halobacterium pharaonis).